The sequence spans 273 residues: MLTPTISKSISLVTILLVLQAFSNTTKAQNCGCSSELCCSQFGFCGNTSDYCGVGCQQGPCFAPPPANGVSVAEIVTQEFFNGIISQAASSCAGNRFYSRGAFLEALDSYSRFGRVGSTDDSRREIAAFFAHVTHETGHFCYIEEIDGASKDYCDENATQYPCNPNKGYYGRGPIQLSWNFNYGPAGTAIGFDGLNAPETVATDPVISFKTALWYWTNRVQPVISQGFGATIRAINGALECDGANTATVQARVRYYTDYCRQLGVDPGNNLTC.

The signal sequence occupies residues 1-28; it reads MLTPTISKSISLVTILLVLQAFSNTTKA. An N-linked (GlcNAc...) asparagine glycan is attached at Asn24. The 35-residue stretch at 29–63 folds into the Chitin-binding type-1 domain; that stretch reads QNCGCSSELCCSQFGFCGNTSDYCGVGCQQGPCFA. Disulfide bonds link Cys31/Cys39, Cys33/Cys45, Cys38/Cys52, and Cys56/Cys61. Asn47 carries N-linked (GlcNAc...) asparagine glycosylation. Residues 70 to 273 are catalytic; that stretch reads VSVAEIVTQE…GVDPGNNLTC (204 aa). Residue Glu136 is the Proton donor of the active site. N-linked (GlcNAc...) asparagine glycosylation is found at Asn157 and Asn270.

It belongs to the glycosyl hydrolase 19 family. Chitinase class I subfamily. Expressed in cells surrounding embryos, stems, seedlings, pollen, roots, shoots, inflorescence, flowers, siliques and leaves. Present in seedpods and seed embryos, but not in roots, inflorescence stems, leaves and flowers.

It carries out the reaction Random endo-hydrolysis of N-acetyl-beta-D-glucosaminide (1-&gt;4)-beta-linkages in chitin and chitodextrins.. Functionally, probably involved in hypersensitive reaction upon Xanthomonas campestris infection. The polypeptide is Endochitinase EP3 (Arabidopsis thaliana (Mouse-ear cress)).